The chain runs to 545 residues: CTP synthase (545 aa).

Residues Met1–Leu266 form an amidoligase domain region. Residue Ser14 coordinates CTP. A UTP-binding site is contributed by Ser14. ATP is bound by residues Ser15–Ile20 and Asp72. Positions 72 and 140 each coordinate Mg(2+). Residues Asp147–Glu149, Lys187–Gln192, and Lys223 contribute to the CTP site. Residues Lys187 to Gln192 and Lys223 each bind UTP. Lys239 to Val241 lines the ATP pocket. The 252-residue stretch at Thr291–Ser542 folds into the Glutamine amidotransferase type-1 domain. Gly352 serves as a coordination point for L-glutamine. Catalysis depends on Cys379, which acts as the Nucleophile; for glutamine hydrolysis. L-glutamine is bound by residues Leu380–Gln383, Glu403, and Arg470. Active-site residues include His515 and Glu517.

This sequence belongs to the CTP synthase family. Homotetramer.

It carries out the reaction UTP + L-glutamine + ATP + H2O = CTP + L-glutamate + ADP + phosphate + 2 H(+). The enzyme catalyses L-glutamine + H2O = L-glutamate + NH4(+). It catalyses the reaction UTP + NH4(+) + ATP = CTP + ADP + phosphate + 2 H(+). Its pathway is pyrimidine metabolism; CTP biosynthesis via de novo pathway; CTP from UDP: step 2/2. Its activity is regulated as follows. Allosterically activated by GTP, when glutamine is the substrate; GTP has no effect on the reaction when ammonia is the substrate. The allosteric effector GTP functions by stabilizing the protein conformation that binds the tetrahedral intermediate(s) formed during glutamine hydrolysis. Inhibited by the product CTP, via allosteric rather than competitive inhibition. Its function is as follows. Catalyzes the ATP-dependent amination of UTP to CTP with either L-glutamine or ammonia as the source of nitrogen. Regulates intracellular CTP levels through interactions with the four ribonucleotide triphosphates. The sequence is that of CTP synthase from Haemophilus ducreyi (strain 35000HP / ATCC 700724).